The chain runs to 826 residues: Glycerol-3-phosphate acyltransferase 1, mitochondrial (826 aa).

Residues 1–87 are Cytoplasmic-facing; sequence MDESALTLGT…FFNPSIPSLG (87 aa). Residues 80-120 form an important for mitochondrial localization region; the sequence is NPSIPSLGLRNVIYINETHTRHRGWLARRLSYVLFIQERDV. The stretch at 88–118 is an intramembrane region; sequence LRNVIYINETHTRHRGWLARRLSYVLFIQER. Topologically, residues 119–826 are cytoplasmic; sequence DVHKGMFATN…LEYILSFVVL (708 aa). An HXXXXD motif motif is present at residues 230–235; it reads HRSHID. Residues R278, R279, K288, R293, and R328 each coordinate CoA. The residue at position 380 (S380) is a Phosphoserine. Residue R462 coordinates CoA. Phosphoserine occurs at positions 686 and 693. N6-acetyllysine occurs at positions 778 and 782.

It belongs to the GPAT/DAPAT family.

The protein resides in the mitochondrion outer membrane. It catalyses the reaction sn-glycerol 3-phosphate + an acyl-CoA = a 1-acyl-sn-glycero-3-phosphate + CoA. It carries out the reaction (9Z,12Z)-octadecadienoyl-CoA + sn-glycerol 3-phosphate = 1-(9Z,12Z)-octadecadienoyl-sn-glycero-3-phosphate + CoA. The catalysed reaction is sn-glycerol 3-phosphate + (9Z)-octadecenoyl-CoA = 1-(9Z-octadecenoyl)-sn-glycero-3-phosphate + CoA. The enzyme catalyses sn-glycerol 3-phosphate + octadecanoyl-CoA = 1-octadecanoyl-sn-glycero-3-phosphate + CoA. It catalyses the reaction sn-glycerol 3-phosphate + hexadecanoyl-CoA = 1-hexadecanoyl-sn-glycero-3-phosphate + CoA. It carries out the reaction dodecanoyl-CoA + sn-glycerol 3-phosphate = 1-dodecanoyl-sn-glycerol 3-phosphate + CoA. The catalysed reaction is 1-acyl-sn-glycero-3-phospho-(1'-sn-glycerol) + an acyl-CoA = a 1,2-diacyl-sn-glycero-3-phospho-(1'-sn-glycerol) + CoA. It participates in phospholipid metabolism; CDP-diacylglycerol biosynthesis; CDP-diacylglycerol from sn-glycerol 3-phosphate: step 1/3. In terms of biological role, mitochondrial membrane protein that catalyzes the essential first step of biosynthesis of glycerolipids such as triglycerides, phosphatidic acids and lysophosphatidic acids. Esterifies acyl-group from acyl-coenzyme A (acyl-CoA) to the sn-1 position of glycerol-3-phosphate, to produce lysophosphatidic acid. Has a narrow hydrophobic binding cleft that selects for a linear acyl chain. Catalytic activity is higher for substrates with a 16-carbon acyl chain. This is Glycerol-3-phosphate acyltransferase 1, mitochondrial from Sus scrofa (Pig).